Here is a 205-residue protein sequence, read N- to C-terminus: Nuclear transcription factor Y subunit C-6 (205 aa).

The tract at residues Met-1 to Pro-24 is disordered.

This sequence belongs to the NFYC/HAP5 subunit family. In terms of assembly, heterotrimeric transcription factor composed of three components, NF-YA, NF-YB and NF-YC. NF-YB and NF-YC must interact and dimerize for NF-YA association and DNA binding. Interacts with NFYB2. Interacts with NFYB8, NFYB10 and HD5/NFYB11.

The protein localises to the nucleus. It is found in the cytoplasm. In terms of biological role, component of the NF-Y/HAP transcription factor complex. In Oryza sativa subsp. japonica (Rice), this protein is Nuclear transcription factor Y subunit C-6.